A 455-amino-acid polypeptide reads, in one-letter code: EP1-like glycoprotein 1 (455 aa).

An N-terminal signal peptide occupies residues 1-22; sequence MLRFDYLLITALAISTVSVVMA. Residues 43-163 form the Bulb-type lectin domain; it reads TEYDASYRFL…HGKFVWQSFD (121 aa). 5 N-linked (GlcNAc...) asparagine glycosylation sites follow: Asn-106, Asn-191, Asn-211, Asn-241, and Asn-289. Cys-374 carries the S-nitrosocysteine modification. Positions 374–455 constitute a PAN domain; sequence CSGGKGKAVN…NTSSVAYIKY (82 aa). 2 cysteine pairs are disulfide-bonded: Cys-410/Cys-432 and Cys-414/Cys-420. An N-linked (GlcNAc...) asparagine glycan is attached at Asn-446.

The protein resides in the secreted. It is found in the cell wall. The sequence is that of EP1-like glycoprotein 1 from Arabidopsis thaliana (Mouse-ear cress).